Reading from the N-terminus, the 437-residue chain is MEIGCITISHKNAKVEEIEKIWLTVKPRLEDVISKCSFSEYAYIFTCNRFEIYLVGENLKSCLQDIAEELGITGKAEIFVGESCLRHLLRVASGIESMIVGEEQILGQVRQCFNLCREGGQAGEVLERVFGKAVQVGRRVRRETAISKGSVSIGSAAVEVAERVLGTLKGKKALLVGAGEMGTLVAKAIAGKEVEAVLIANRTYEKAEELAKRIGGVAVKFDKLVDYLKVCDVVISATSAPHAVITRGDVERAMRERSQKLLIIDIALPRDVDESVAQLDGVELLTIDDLRRISEENLARRREEIAKVEGIIEEELEQLKLLLKDISARDAIAAMYSLAERFVGEEVEELYAKLNARYGVSEDVKEILNDFANSLIKKFLREPTVRLREAARKDEFHVIESIKYVFGDGNGRVSEGKDAKVEEGKPEVDVQRSKAES.

Residues threonine 46–arginine 49, serine 97, glutamate 102–glutamine 104, and glutamine 108 each bind substrate. Cysteine 47 functions as the Nucleophile in the catalytic mechanism. Glycine 177–glycine 182 is a binding site for NADP(+). The segment at asparagine 410 to serine 437 is disordered. The span at serine 414–serine 437 shows a compositional bias: basic and acidic residues.

Belongs to the glutamyl-tRNA reductase family. As to quaternary structure, homodimer.

The catalysed reaction is (S)-4-amino-5-oxopentanoate + tRNA(Glu) + NADP(+) = L-glutamyl-tRNA(Glu) + NADPH + H(+). It participates in porphyrin-containing compound metabolism; protoporphyrin-IX biosynthesis; 5-aminolevulinate from L-glutamyl-tRNA(Glu): step 1/2. Functionally, catalyzes the NADPH-dependent reduction of glutamyl-tRNA(Glu) to glutamate 1-semialdehyde (GSA). In Archaeoglobus fulgidus (strain ATCC 49558 / DSM 4304 / JCM 9628 / NBRC 100126 / VC-16), this protein is Glutamyl-tRNA reductase.